The chain runs to 201 residues: MSENYSFSLRKFKLVFLGEQSVGKTSLITRFMYDQFDNTYQATIGIDFLSKTMYLEDRTVRLQLWDTAGQERFRSLIPSYIRDSSVAIIVYDITNHNSFVNTEKWIEDVRAERGDDVIIVLVGNKTDLADKRQVTQEEGEKKAKELKIMHMETSAKAGHNVKLLFRKIAQMLPGMENVETQSTQMIDVSIQPNENESSCNC.

GTP is bound at residue 18–25 (GEQSVGKT). The short motif at 40-48 (YQATIGIDF) is the Effector region element. GTP contacts are provided by residues 66 to 70 (DTAGQ) and 124 to 127 (NKTD). Residues Cys199 and Cys201 are each lipidated (S-geranylgeranyl cysteine). Cys201 is modified (cysteine methyl ester).

This sequence belongs to the small GTPase superfamily. Rab family.

Its subcellular location is the endosome membrane. The protein resides in the golgi apparatus membrane. The protein localises to the nucleus. It localises to the cytoplasm. It is found in the cytosol. Functionally, has a role in retrograde traffricking of proteins from the endosome to the Golgi. Involved in protein transport to the plasma membrane. Involved in the secretory pathway where it has a role in acid phosphatase secretion. Required also in normal glycosylation trafficking pathways. The protein is GTP-binding protein ryh1 (ryh1) of Schizosaccharomyces pombe (strain 972 / ATCC 24843) (Fission yeast).